The primary structure comprises 308 residues: Urease accessory protein UreD (308 aa).

This sequence belongs to the UreD family. UreD, UreF and UreG form a complex that acts as a GTP-hydrolysis-dependent molecular chaperone, activating the urease apoprotein by helping to assemble the nickel containing metallocenter of UreC. The UreE protein probably delivers the nickel.

It is found in the cytoplasm. Functionally, required for maturation of urease via the functional incorporation of the urease nickel metallocenter. This chain is Urease accessory protein UreD, found in Psychromonas ingrahamii (strain DSM 17664 / CCUG 51855 / 37).